Consider the following 78-residue polypeptide: Antimicrobial peptide marcin-18 (78 aa).

The first 23 residues, 1–23, serve as a signal peptide directing secretion; that stretch reads MQFKKQLMVIFLAYFLVVNESEA. R41 carries the post-translational modification Arginine amide. Residues 42 to 78 constitute a propeptide that is removed on maturation; sequence RKNQRSRSIMKRDLENLFDPYQRNLELDRLLKQLPNY.

It belongs to the non-disulfide-bridged peptide (NDBP) superfamily. Medium-length antimicrobial peptide (group 3) family. In terms of tissue distribution, expressed by the venom gland.

The protein localises to the secreted. The protein resides in the target cell membrane. Antimicrobial peptide with potent activity against bacteria. Acts by fastly disrupting the bacterial membrane. Shows activity against Gram-positive bacteria S.aureus (MIC=1.5-2.9 uM) and S.epidermidis (MIC=2.9 uM), M.luteus (MIC=23.4 uM), B.thuringiensis (MIC=2.9 uM), B.subtilis (MIC=2.9 uM) and Gram-negative bacteria E.coli (MIC=5.9-11.7 uM) and P.aeruginosa (MIC=5.9 uM), as well as against penicillin (MIC=2.9 uM) and methicillin (MIC=1.5-2.9 uM) resistant bacteria. Antibiotic activity is not affected by major negatively charged components of the prokaryotic cell wall (e.g. lipopolysaccharides and lipoteichoic acid). In vivo, in a mouse model of lethal peritonitis, shows potent antibiotic activity without cytotoxicity, improving the survival rate. In Olivierus martensii (Manchurian scorpion), this protein is Antimicrobial peptide marcin-18.